A 46-amino-acid chain; its full sequence is Large ribosomal subunit protein bL34 (46 aa).

This sequence belongs to the bacterial ribosomal protein bL34 family.

The polypeptide is Large ribosomal subunit protein bL34 (Synechococcus sp. (strain JA-2-3B'a(2-13)) (Cyanobacteria bacterium Yellowstone B-Prime)).